We begin with the raw amino-acid sequence, 624 residues long: MAKIARLPDNVANKISAGEVVQRPASVIKELLENAIDACASKITVTIKDAGKELVQIVDNGIGMSRQDALLSVERFATSKISGVEDLDSLMSLGFRGEALPSIASVSQFELKTKPEGALLGFRFRCDGGEPVEESEVNAEKGTTITVRNLFYNVPARRKFLKSNATEFRHIFESVKSLALAYPEIEWKMVSDDEELFHFRTPDIYERLDAFYGENFSLSLIPVSEENDYLSISGFLGKPGMQKRQKLDQYIYVNRRIIQNRMLSQALQQAYGELLVERQAPFALLFLGIDPSRIDVNVHPAKLEVKFEDERSVRTMFYPVIKRTIQLHDFSPDAAEKEPCSIKEGTLDCSSRKLGFQDIAEPASTTSTLYANYRQGAFGDTPFERPAYAEKEPRPSSINTGFERFEPDLREGGDLFSTTLQARPYEDDNTPDPGENDPKIWQLHNKYIICQIKTGMMIIDQHVAHERVLYERAVDVMNQNVPNSQQLLFPQKIELRAWEYEVFEEIRDDLYRLGFNLRSFGAKTVMIEGIPQDVRPGTEVTILQDMITEFQENSSKLKLERRENLARSYSCRNAIMAGQKLSLEEMRSLIDNLFATRVPYTCPHGRPVIIKLSLDQLDRMFGRK.

Belongs to the DNA mismatch repair MutL/HexB family.

In terms of biological role, this protein is involved in the repair of mismatches in DNA. It is required for dam-dependent methyl-directed DNA mismatch repair. May act as a 'molecular matchmaker', a protein that promotes the formation of a stable complex between two or more DNA-binding proteins in an ATP-dependent manner without itself being part of a final effector complex. The sequence is that of DNA mismatch repair protein MutL from Chlorobium phaeobacteroides (strain DSM 266 / SMG 266 / 2430).